The primary structure comprises 581 residues: NADH-quinone oxidoreductase subunit C/D (581 aa).

The tract at residues 1 to 172 (MSGAELISDL…PPFVMTAARF (172 aa)) is NADH dehydrogenase I subunit C. The interval 196–581 (ELMILNYGPH…IDYVMSDVDR (386 aa)) is NADH dehydrogenase I subunit D.

This sequence in the N-terminal section; belongs to the complex I 30 kDa subunit family. In the C-terminal section; belongs to the complex I 49 kDa subunit family. As to quaternary structure, NDH-1 is composed of 13 different subunits. Subunits NuoB, CD, E, F, and G constitute the peripheral sector of the complex.

The protein localises to the cell inner membrane. The enzyme catalyses a quinone + NADH + 5 H(+)(in) = a quinol + NAD(+) + 4 H(+)(out). In terms of biological role, NDH-1 shuttles electrons from NADH, via FMN and iron-sulfur (Fe-S) centers, to quinones in the respiratory chain. The immediate electron acceptor for the enzyme in this species is believed to be ubiquinone. Couples the redox reaction to proton translocation (for every two electrons transferred, four hydrogen ions are translocated across the cytoplasmic membrane), and thus conserves the redox energy in a proton gradient. The protein is NADH-quinone oxidoreductase subunit C/D of Rhodopseudomonas palustris (strain BisA53).